Reading from the N-terminus, the 257-residue chain is UPF0246 protein Lcho_2652 (257 aa).

The protein belongs to the UPF0246 family.

In Leptothrix cholodnii (strain ATCC 51168 / LMG 8142 / SP-6) (Leptothrix discophora (strain SP-6)), this protein is UPF0246 protein Lcho_2652.